Consider the following 882-residue polypeptide: Valine--tRNA ligase (882 aa).

Residues 50 to 60 carry the 'HIGH' region motif; that stretch reads PNVTGKLHLGH. Residues 526–530 carry the 'KMSKS' region motif; that stretch reads KMSKS. Residue K529 participates in ATP binding. A coiled-coil region spans residues 810–881; sequence LEALIDLDLE…VLERIETLKE (72 aa).

The protein belongs to the class-I aminoacyl-tRNA synthetase family. ValS type 1 subfamily. In terms of assembly, monomer.

It localises to the cytoplasm. The catalysed reaction is tRNA(Val) + L-valine + ATP = L-valyl-tRNA(Val) + AMP + diphosphate. Its function is as follows. Catalyzes the attachment of valine to tRNA(Val). As ValRS can inadvertently accommodate and process structurally similar amino acids such as threonine, to avoid such errors, it has a 'posttransfer' editing activity that hydrolyzes mischarged Thr-tRNA(Val) in a tRNA-dependent manner. This is Valine--tRNA ligase from Listeria innocua serovar 6a (strain ATCC BAA-680 / CLIP 11262).